Consider the following 501-residue polypeptide: L-ornithine N(5)-monooxygenase (501 aa).

The interval 1–31 (MESVERKSESSYLGMRNMQPEQRLSLDPPRL) is disordered. Residues 83–91 (ERQKQFAWH) and Gln102 each bind FAD. Lys107 provides a ligand contact to substrate. Val168 is an FAD binding site. NADP(+) contacts are provided by residues 254–257 (SGQS) and Arg279. Substrate is bound by residues 293–296 (NEIF) and Asn323. Position 323–325 (323–325 (NYS)) interacts with NADP(+). The disordered stretch occupies residues 366–390 (EHHGPQSRMRIHLKSSKPESEGAAN). Basic and acidic residues predominate over residues 381 to 390 (SKPESEGAAN). 466–468 (SLL) contributes to the FAD binding site. Ser469 is a substrate binding site.

Belongs to the lysine N(6)-hydroxylase/L-ornithine N(5)-oxygenase family. In terms of assembly, homotetramer. FAD is required as a cofactor.

The enzyme catalyses L-ornithine + NADPH + O2 = N(5)-hydroxy-L-ornithine + NADP(+) + H2O. The catalysed reaction is L-ornithine + NADH + O2 = N(5)-hydroxy-L-ornithine + NAD(+) + H2O. It participates in siderophore biosynthesis; ferrichrome biosynthesis. L-ornithine N(5)-monooxygenase; part of the siderophore biosynthetic pathway. Aspergillus fumigatus produces four types of siderophores, low-molecular-mass iron chelators, including excreted fusarinine C (FsC) and triacetylfusarinine C (TAFC) for iron uptake; and intacellular ferricrocin (FC) for hyphal and hydroxyferricrocin (HFC) for conidial iron distribution and storage. TAFC consists of three N(2)-acetyl-N(5)-anhydromevalonyl-N(5)-hydroxyornithine residues cyclically linked by ester bonds; FC is a cyclic hexapeptide with the structure Gly-Ser-Gly-(N(5)-acetyl-N(5)-hydroxyornithine)x3. The biosynthesis of all four siderophores depends on the hydroxylation of ornithine, catalyzed by the monooxygenase sidA. SidA is highly specific for its substrate, only hydrolyzing l-ornithine, and has preference for NADPH over NADH, NADPH playing a role in stabilization of the C4a-hydroperoxyflavin intermediate. Subsequently, the pathways for biosynthesis of extra- and intracellular siderophores split. For biosynthesis of extracellular siderophores, the transacylase sidF transfers anhydromevalonyl to N(5)-hydroxyornithine. The required anhydromevalonyl-CoA moiety is derived from mevalonate by CoA ligation and dehydration catalyzed by sidI and sidH respectively. The acetylation of N(5)-hydroxyornithine for FC biosynthesis involves the constitutively expressed sidL. FC is hydroxylated to HFC by an as yet uncharacterized enzyme during conidiation. Assembly of fusarinine C (FsC) and FC is catalyzed by two different nonribosomal peptide synthetases (NRPS), sidD and sidC respectively. Subsequently, sidG catalyzes N2-acetylation of FsC for forming TAFC. Both extra- and intracellular siderophores are crucial for growth during iron limitation and virulence. The chain is L-ornithine N(5)-monooxygenase from Aspergillus fumigatus (strain ATCC MYA-4609 / CBS 101355 / FGSC A1100 / Af293) (Neosartorya fumigata).